The chain runs to 81 residues: Cytochrome c oxidase subunit NDUFA4 (81 aa).

Residues 1-14 are Mitochondrial matrix-facing; that stretch reads MLRQIIGQAKKHPS. N6-acetyllysine is present on Lys-10. A helical membrane pass occupies residues 15–37; the sequence is LIPLFVFIGTGATGATLYLLRLA. At 38–81 the chain is on the mitochondrial intermembrane side; sequence LFNPDVCWDRNNPEPWNKLGPNDQYKFYSVNVDYSKLKKERPDF. At Ser-66 the chain carries Phosphoserine.

The protein belongs to the complex IV NDUFA4 subunit family. In terms of assembly, component of the cytochrome c oxidase (complex IV, CIV), a multisubunit enzyme composed of 14 subunits. The complex is composed of a catalytic core of 3 subunits MT-CO1, MT-CO2 and MT-CO3, encoded in the mitochondrial DNA, and 11 supernumerary subunits COX4I1 (or COX4I2), COX5A, COX5B, COX6A1 (or COX6A2), COX6B1 (or COX6B2), COX6C, COX7A2 (or COX7A1), COX7B, COX7C, COX8A and NDUFA4, which are encoded in the nuclear genome. The complex exists as a monomer or a dimer and forms supercomplexes (SCs) in the inner mitochondrial membrane with NADH-ubiquinone oxidoreductase (complex I, CI) and ubiquinol-cytochrome c oxidoreductase (cytochrome b-c1 complex, complex III, CIII), resulting in different assemblies (supercomplex SCI(1)III(2)IV(1) and megacomplex MCI(2)III(2)IV(2)). Interacts with RAB5IF. Interacts with FLVCR2; this interaction occurs in the absence of heme and is disrupted upon heme binding.

The protein localises to the mitochondrion inner membrane. In terms of biological role, component of the cytochrome c oxidase, the last enzyme in the mitochondrial electron transport chain which drives oxidative phosphorylation. The respiratory chain contains 3 multisubunit complexes succinate dehydrogenase (complex II, CII), ubiquinol-cytochrome c oxidoreductase (cytochrome b-c1 complex, complex III, CIII) and cytochrome c oxidase (complex IV, CIV), that cooperate to transfer electrons derived from NADH and succinate to molecular oxygen, creating an electrochemical gradient over the inner membrane that drives transmembrane transport and the ATP synthase. Cytochrome c oxidase is the component of the respiratory chain that catalyzes the reduction of oxygen to water. Electrons originating from reduced cytochrome c in the intermembrane space (IMS) are transferred via the dinuclear copper A center (CU(A)) of subunit 2 and heme A of subunit 1 to the active site in subunit 1, a binuclear center (BNC) formed by heme A3 and copper B (CU(B)). The BNC reduces molecular oxygen to 2 water molecules unsing 4 electrons from cytochrome c in the IMS and 4 protons from the mitochondrial matrix. NDUFA4 is required for complex IV maintenance. The protein is Cytochrome c oxidase subunit NDUFA4 (NDUFA4) of Homo sapiens (Human).